We begin with the raw amino-acid sequence, 148 residues long: MEVILLEKVANLGNLGDKVNIKGGYARNFLLPQGKATVATAENVAAFEARRAELEKAAAEKKAAAEARAAQLSELVVTLGAHAGDEGKLFGSIGTRDIAEAVSAAGYPLEKAEVRLPNGALRNTGEFDVAVHLHTDVETTLKLIIVAE.

It belongs to the bacterial ribosomal protein bL9 family.

Functionally, binds to the 23S rRNA. This Pseudomonas aeruginosa (strain LESB58) protein is Large ribosomal subunit protein bL9.